A 406-amino-acid chain; its full sequence is Multifunctional CCA protein (406 aa).

Gly8 and Arg11 together coordinate ATP. Residues Gly8 and Arg11 each contribute to the CTP site. Residues Asp21 and Asp23 each coordinate Mg(2+). Residues Arg91, Arg137, and Arg140 each coordinate ATP. CTP contacts are provided by Arg91, Arg137, and Arg140. The region spanning 228–329 (TGIHTLMVAE…IKILNKFDVW (102 aa)) is the HD domain.

Belongs to the tRNA nucleotidyltransferase/poly(A) polymerase family. Bacterial CCA-adding enzyme type 1 subfamily. As to quaternary structure, monomer. Can also form homodimers and oligomers. Mg(2+) is required as a cofactor. Requires Ni(2+) as cofactor.

The enzyme catalyses a tRNA precursor + 2 CTP + ATP = a tRNA with a 3' CCA end + 3 diphosphate. The catalysed reaction is a tRNA with a 3' CCA end + 2 CTP + ATP = a tRNA with a 3' CCACCA end + 3 diphosphate. Its function is as follows. Catalyzes the addition and repair of the essential 3'-terminal CCA sequence in tRNAs without using a nucleic acid template. Adds these three nucleotides in the order of C, C, and A to the tRNA nucleotide-73, using CTP and ATP as substrates and producing inorganic pyrophosphate. tRNA 3'-terminal CCA addition is required both for tRNA processing and repair. Also involved in tRNA surveillance by mediating tandem CCA addition to generate a CCACCA at the 3' terminus of unstable tRNAs. While stable tRNAs receive only 3'-terminal CCA, unstable tRNAs are marked with CCACCA and rapidly degraded. This chain is Multifunctional CCA protein, found in Vibrio parahaemolyticus serotype O3:K6 (strain RIMD 2210633).